Consider the following 262-residue polypeptide: 5'-nucleotidase SurE (262 aa).

4 residues coordinate a divalent metal cation: aspartate 8, aspartate 9, serine 39, and asparagine 95.

It belongs to the SurE nucleotidase family. Requires a divalent metal cation as cofactor.

The protein resides in the cytoplasm. The enzyme catalyses a ribonucleoside 5'-phosphate + H2O = a ribonucleoside + phosphate. Its function is as follows. Nucleotidase that shows phosphatase activity on nucleoside 5'-monophosphates. The protein is 5'-nucleotidase SurE of Methanothermobacter thermautotrophicus (strain ATCC 29096 / DSM 1053 / JCM 10044 / NBRC 100330 / Delta H) (Methanobacterium thermoautotrophicum).